Consider the following 314-residue polypeptide: Probable cell division protein WhiA (314 aa).

Positions Ser-274–Asn-308 form a DNA-binding region, H-T-H motif.

The protein belongs to the WhiA family.

Its function is as follows. Involved in cell division and chromosome segregation. The sequence is that of Probable cell division protein WhiA from Staphylococcus aureus (strain USA300).